A 342-amino-acid chain; its full sequence is Holliday junction branch migration complex subunit RuvB (342 aa).

The interval 1–181 (MENRMVTPFD…FGMLCAMEFY (181 aa)) is large ATPase domain (RuvB-L). ATP-binding positions include Leu20, Arg21, Gly62, Lys65, Thr66, Thr67, 128–130 (EDY), Arg171, Tyr181, and Arg218. A Mg(2+)-binding site is contributed by Thr66. The segment at 182-252 (TDEELMEIVV…GAKAALDLLE (71 aa)) is small ATPAse domain (RuvB-S). Positions 255-342 (KEGLDKIDNK…KDNQVSIFNK (88 aa)) are head domain (RuvB-H). DNA contacts are provided by Arg310 and Arg315.

It belongs to the RuvB family. As to quaternary structure, homohexamer. Forms an RuvA(8)-RuvB(12)-Holliday junction (HJ) complex. HJ DNA is sandwiched between 2 RuvA tetramers; dsDNA enters through RuvA and exits via RuvB. An RuvB hexamer assembles on each DNA strand where it exits the tetramer. Each RuvB hexamer is contacted by two RuvA subunits (via domain III) on 2 adjacent RuvB subunits; this complex drives branch migration. In the full resolvosome a probable DNA-RuvA(4)-RuvB(12)-RuvC(2) complex forms which resolves the HJ.

The protein resides in the cytoplasm. It catalyses the reaction ATP + H2O = ADP + phosphate + H(+). Its function is as follows. The RuvA-RuvB-RuvC complex processes Holliday junction (HJ) DNA during genetic recombination and DNA repair, while the RuvA-RuvB complex plays an important role in the rescue of blocked DNA replication forks via replication fork reversal (RFR). RuvA specifically binds to HJ cruciform DNA, conferring on it an open structure. The RuvB hexamer acts as an ATP-dependent pump, pulling dsDNA into and through the RuvAB complex. RuvB forms 2 homohexamers on either side of HJ DNA bound by 1 or 2 RuvA tetramers; 4 subunits per hexamer contact DNA at a time. Coordinated motions by a converter formed by DNA-disengaged RuvB subunits stimulates ATP hydrolysis and nucleotide exchange. Immobilization of the converter enables RuvB to convert the ATP-contained energy into a lever motion, pulling 2 nucleotides of DNA out of the RuvA tetramer per ATP hydrolyzed, thus driving DNA branch migration. The RuvB motors rotate together with the DNA substrate, which together with the progressing nucleotide cycle form the mechanistic basis for DNA recombination by continuous HJ branch migration. Branch migration allows RuvC to scan DNA until it finds its consensus sequence, where it cleaves and resolves cruciform DNA. This is Holliday junction branch migration complex subunit RuvB from Clostridium botulinum (strain ATCC 19397 / Type A).